A 150-amino-acid chain; its full sequence is Transcriptional repressor NrdR (150 aa).

The segment at 3–34 (CPFCNASDTKVVDTRASEDDKIVRRRRECISC) is a zinc-finger region. One can recognise an ATP-cone domain in the interval 49 to 139 (LTVVKKDKNR…VYREFTDVKS (91 aa)).

This sequence belongs to the NrdR family. Zn(2+) serves as cofactor.

Negatively regulates transcription of bacterial ribonucleotide reductase nrd genes and operons by binding to NrdR-boxes. This is Transcriptional repressor NrdR from Finegoldia magna (strain ATCC 29328 / DSM 20472 / WAL 2508) (Peptostreptococcus magnus).